A 92-amino-acid polypeptide reads, in one-letter code: Small ribosomal subunit protein uS19c (92 aa).

This sequence belongs to the universal ribosomal protein uS19 family.

Its subcellular location is the plastid. It localises to the chloroplast. Protein S19 forms a complex with S13 that binds strongly to the 16S ribosomal RNA. The chain is Small ribosomal subunit protein uS19c from Calycanthus floridus var. glaucus (Eastern sweetshrub).